The following is a 193-amino-acid chain: Interleukin-18 (193 aa).

The propeptide occupies 1–36; that stretch reads MAANLIEDNCINLVKMKFVNNTLYFKAESDEGLESD.

It belongs to the IL-1 family. As to quaternary structure, forms a ternary complex with ligand-binding receptor subunit IL18R1 and signaling receptor subunit IL18RAP at the plasma membrane. Mature IL18 first binds to IL18R1 forming a low affinity binary complex, which then interacts with IL18RAP to form a high affinity ternary complex that signals inside the cell. Interacts with cargo receptor TMED10; the interaction mediates the translocation from the cytoplasm into the ERGIC (endoplasmic reticulum-Golgi intermediate compartment) and thereby secretion. In terms of processing, the pro-IL-18 precursor is processed by CASP1, CASP4 or CASP5 to yield its mature, active form. The pro-IL-18 precursor features autoinhibitory interactions between the propeptide and the post-cleavage-site region, preventing recognition by the IL18R1 receptor. Processing by CASP1, CASP4 or CASP5 induces conformational changes to generate critical receptor-binding sites. The mature form is then secreted and released in the extracellular milieu by passing through the gasdermin-D (GSDMD) pore. In contrast, cleavage by CASP3 inactivates IL18.

Its subcellular location is the cytoplasm. It is found in the cytosol. The protein localises to the secreted. Functionally, pro-inflammatory cytokine primarily involved in epithelial barrier repair, polarized T-helper 1 (Th1) cell and natural killer (NK) cell immune responses. Upon binding to IL18R1 and IL18RAP, forms a signaling ternary complex which activates NF-kappa-B, triggering synthesis of inflammatory mediators. Synergizes with IL12/interleukin-12 to induce IFNG synthesis from T-helper 1 (Th1) cells and natural killer (NK) cells. Involved in transduction of inflammation downstream of pyroptosis: its mature form is specifically released in the extracellular milieu by passing through the gasdermin-D (GSDMD) pore. This is Interleukin-18 (IL18) from Canis lupus familiaris (Dog).